A 288-amino-acid polypeptide reads, in one-letter code: ATP synthase gamma chain (288 aa).

Belongs to the ATPase gamma chain family. As to quaternary structure, F-type ATPases have 2 components, CF(1) - the catalytic core - and CF(0) - the membrane proton channel. CF(1) has five subunits: alpha(3), beta(3), gamma(1), delta(1), epsilon(1). CF(0) has three main subunits: a, b and c.

The protein localises to the cell inner membrane. In terms of biological role, produces ATP from ADP in the presence of a proton gradient across the membrane. The gamma chain is believed to be important in regulating ATPase activity and the flow of protons through the CF(0) complex. This chain is ATP synthase gamma chain, found in Vesicomyosocius okutanii subsp. Calyptogena okutanii (strain HA).